A 145-amino-acid chain; its full sequence is Granulysin (145 aa).

An N-terminal signal peptide occupies residues 1 to 22 (MATWALLLLAAMLLGNPGLVFS). Residues 62–142 (LGRDYRTCLT…EDLRLCIPST (81 aa)) enclose the Saposin B-type domain. Disulfide bonds link Cys-69–Cys-132 and Cys-96–Cys-107.

A 9 kDa form is produced by proteolytic processing of a 15 kDa protein. As to expression, expressed in natural killer and T-cells.

It localises to the secreted. Its function is as follows. Antimicrobial protein that kills intracellular pathogens. Active against a broad range of microbes, including Gram-positive and Gram-negative bacteria, fungi, and parasites. Kills Mycobacterium tuberculosis. The polypeptide is Granulysin (GNLY) (Homo sapiens (Human)).